Here is a 247-residue protein sequence, read N- to C-terminus: ATP synthase subunit a (247 aa).

The next 6 helical transmembrane spans lie at 26-46 (ITNNTIILFVILIGFTFLFYV), 85-105 (YFPLVLFVFSFILFANLIGLL), 115-135 (IIFTFQIAFSLFFGITLINFF), 141-161 (FFNLFVPSGVPKPLIPFLVVI), 178-198 (FANMLAGHTLLNILSAFIFNV), and 205-225 (ISFLPLLFIVFIIVLEFCIAI).

Belongs to the ATPase A chain family. As to quaternary structure, F-type ATPases have 2 components, CF(1) - the catalytic core - and CF(0) - the membrane proton channel. CF(1) has five subunits: alpha(3), beta(3), gamma(1), delta(1), epsilon(1). CF(0) has three main subunits: a, b and c.

It is found in the mitochondrion inner membrane. Its function is as follows. Mitochondrial membrane ATP synthase (F(1)F(0) ATP synthase or Complex V) produces ATP from ADP in the presence of a proton gradient across the membrane which is generated by electron transport complexes of the respiratory chain. F-type ATPases consist of two structural domains, F(1) - containing the extramembraneous catalytic core and F(0) - containing the membrane proton channel, linked together by a central stalk and a peripheral stalk. During catalysis, ATP synthesis in the catalytic domain of F(1) is coupled via a rotary mechanism of the central stalk subunits to proton translocation. Key component of the proton channel; it may play a direct role in the translocation of protons across the membrane. This chain is ATP synthase subunit a (ATP6), found in Acanthamoeba castellanii (Amoeba).